The sequence spans 1893 residues: Transcription initiation factor TFIID subunit 1 (1893 aa).

The 435-residue stretch at 1-435 (MGPGCDLLLR…VTQLHWEDDI (435 aa)) folds into the Protein kinase 1 domain. Ser137 bears the Phosphoserine; by autocatalysis mark. Disordered stretches follow at residues 155–184 (LMPP…NGEG) and 197–224 (ASEK…AESE). Over residues 156–165 (MPPPPPPPGP) the composition is skewed to pro residues. Low complexity predominate over residues 197 to 208 (ASEKVDFSSSSD). Phosphoserine; by autocatalysis is present on Ser328. A disordered region spans residues 534 to 557 (IPDEKEEATSNSPSKESKKESSLK). A histone acetyltransferase (HAT) region spans residues 538–997 (KEEATSNSPS…KIPNKPTQQK (460 aa)). N6-acetyllysine is present on Lys565. Glycyl lysine isopeptide (Lys-Gly) (interchain with G-Cter in SUMO2) cross-links involve residues Lys570 and Lys583. Disordered stretches follow at residues 990–1009 (PNKP…KKTV), 1128–1148 (MLQN…QERK), 1158–1177 (GSAA…VTSL), and 1254–1278 (RLKR…MKER). 2 stretches are compositionally biased toward basic and acidic residues: residues 995–1004 (QQKDDKEPQP) and 1139–1148 (SREREEQERK). The segment at residues 1216–1294 (VRIRTTKDEE…CGACGAIGHM (79 aa)) is a DNA-binding region (HMG box; involved in promoter binding). Positions 1254–1270 (RLKRNQEKEKLKGPPEK) are enriched in basic and acidic residues. The segment at 1363–1650 (VLKFPKQQLP…TAKEAALEEA (288 aa)) is interaction with ASF1A and ASF1B. The Nuclear localization signal motif lies at 1372 to 1379 (PPKKKRRV). 2 Bromo domains span residues 1397 to 1505 (RRRT…LKEK) and 1519 to 1628 (LLDD…LTEY). The Protein kinase 2 domain occupies 1446-1893 (MDLQTLRENV…AGDSDLDSDE (448 aa)). The disordered stretch occupies residues 1651–1676 (ELESLDPMTPGPYTPQPPDLYDTNTS). Over residues 1659 to 1668 (TPGPYTPQPP) the composition is skewed to pro residues. Ser1690, Ser1693, Ala1718, Glu1721, and Gly1723 each carry phosphoserine. Residues 1696–1893 (DIPSATPEKQ…AGDSDLDSDE (198 aa)) are disordered. 2 stretches are compositionally biased toward acidic residues: residues 1709-1723 (EGED…EEEG) and 1741-1756 (EGED…EEGD). 3 positions are modified to phosphoserine: Ser1799, Ser1802, and Ser1820. The segment covering 1830–1840 (KSNTQDTSFSS) has biased composition (polar residues). The segment covering 1846–1857 (VSEEEEDEEEEE) has biased composition (acidic residues). Ser1847 carries the phosphoserine modification. The span at 1860 to 1869 (SGPSVLSQVH) shows a compositional bias: polar residues.

This sequence belongs to the TAF1 family. As to quaternary structure, component of the TFIID basal transcription factor complex, composed of TATA-box-binding protein TBP, and a number of TBP-associated factors (TAFs), including TAF1, TAF2, TAF3, TAF4, TAF5, TAF6, TAF7, TAF8, TAF9, TAF10, TAF11, TAF12 and TAF13. Interacts with TAF7; the interaction is direct. TAF1, when part of the TFIID complex, interacts with C-terminus of TP53. Part of a TFIID-containing RNA polymerase II pre-initiation complex that is composed of TBP and at least GTF2A1, GTF2A2, GTF2E1, GTF2E2, GTF2F1, GTF2H2, GTF2H3, GTF2H4, GTF2H5, GTF2B, TCEA1, ERCC2, ERCC3, TAF1, TAF2, TAF3, TAF4, TAF5, TAF6, TAF7, TAF8, TAF9, TAF10, TAF11, TAF12 and TAF13. Component of some MLL1/MLL complex, at least composed of the core components KMT2A/MLL1, ASH2L, HCFC1/HCF1, WDR5 and RBBP5, as well as the facultative components BACC1, CHD8, E2F6, HSP70, INO80C, KANSL1, LAS1L, MAX, MCRS1, MGA, KAT8/MOF, PELP1, PHF20, PRP31, RING2, RUVB1/TIP49A, RUVB2/TIP49B, SENP3, TAF1, TAF4, TAF6, TAF7, TAF9 and TEX10. RB1 interacts with the N-terminal domain of TAF1. Interacts with ASF1A and ASF1B. Interacts (via bromo domains) with acetylated lysine residues on the N-terminus of histone H1.4, H2A, H2B, H3 and H4 (in vitro). (Microbial infection) Interacts with SV40 Large T antigen. In terms of assembly, (Microbial infection) Interacts with herpes simplex virus 1 ICP4. The cofactor is Mg(2+). Post-translationally, phosphorylated by casein kinase II in vitro.

Its subcellular location is the nucleus. The catalysed reaction is L-seryl-[protein] + ATP = O-phospho-L-seryl-[protein] + ADP + H(+). It carries out the reaction L-threonyl-[protein] + ATP = O-phospho-L-threonyl-[protein] + ADP + H(+). It catalyses the reaction L-lysyl-[protein] + acetyl-CoA = N(6)-acetyl-L-lysyl-[protein] + CoA + H(+). With respect to regulation, autophosphorylates on Ser residues. Inhibited by retinoblastoma tumor suppressor protein, RB1. Binding to TAF7 or CIITA inhibits the histone acetyltransferase activity. Functionally, the TFIID basal transcription factor complex plays a major role in the initiation of RNA polymerase II (Pol II)-dependent transcription. TFIID recognizes and binds promoters with or without a TATA box via its subunit TBP, a TATA-box-binding protein, and promotes assembly of the pre-initiation complex (PIC). The TFIID complex consists of TBP and TBP-associated factors (TAFs), including TAF1, TAF2, TAF3, TAF4, TAF5, TAF6, TAF7, TAF8, TAF9, TAF10, TAF11, TAF12 and TAF13. TAF1 is the largest component and core scaffold of the TFIID complex, involved in nucleating complex assembly. TAF1 forms a promoter DNA binding subcomplex of TFIID, together with TAF7 and TAF2. Contains novel N- and C-terminal Ser/Thr kinase domains which can autophosphorylate or transphosphorylate other transcription factors. Phosphorylates TP53 on 'Thr-55' which leads to MDM2-mediated degradation of TP53. Phosphorylates GTF2A1 and GTF2F1 on Ser residues. Possesses DNA-binding activity. Essential for progression of the G1 phase of the cell cycle. Exhibits histone acetyltransferase activity towards histones H3 and H4. The polypeptide is Transcription initiation factor TFIID subunit 1 (Homo sapiens (Human)).